A 238-amino-acid chain; its full sequence is Ubiquinone/menaquinone biosynthesis C-methyltransferase UbiE (238 aa).

S-adenosyl-L-methionine-binding residues include threonine 62 and aspartate 82.

It belongs to the class I-like SAM-binding methyltransferase superfamily. MenG/UbiE family.

It catalyses the reaction a 2-demethylmenaquinol + S-adenosyl-L-methionine = a menaquinol + S-adenosyl-L-homocysteine + H(+). The catalysed reaction is a 2-methoxy-6-(all-trans-polyprenyl)benzene-1,4-diol + S-adenosyl-L-methionine = a 5-methoxy-2-methyl-3-(all-trans-polyprenyl)benzene-1,4-diol + S-adenosyl-L-homocysteine + H(+). It participates in quinol/quinone metabolism; menaquinone biosynthesis; menaquinol from 1,4-dihydroxy-2-naphthoate: step 2/2. The protein operates within cofactor biosynthesis; ubiquinone biosynthesis. Functionally, methyltransferase required for the conversion of demethylmenaquinol (DMKH2) to menaquinol (MKH2) and the conversion of 2-polyprenyl-6-methoxy-1,4-benzoquinol (DDMQH2) to 2-polyprenyl-3-methyl-6-methoxy-1,4-benzoquinol (DMQH2). This chain is Ubiquinone/menaquinone biosynthesis C-methyltransferase UbiE, found in Wolbachia pipientis wMel.